The sequence spans 570 residues: Adenine deaminase 2 (570 aa).

This sequence belongs to the metallo-dependent hydrolases superfamily. Adenine deaminase family. It depends on Mn(2+) as a cofactor.

It catalyses the reaction adenine + H2O + H(+) = hypoxanthine + NH4(+). The protein is Adenine deaminase 2 of Carboxydothermus hydrogenoformans (strain ATCC BAA-161 / DSM 6008 / Z-2901).